The chain runs to 396 residues: 1-deoxy-D-xylulose 5-phosphate reductoisomerase (396 aa).

6 residues coordinate NADPH: T15, G16, S17, I18, G41, and N129. 1-deoxy-D-xylulose 5-phosphate is bound at residue K130. Position 131 (E131) interacts with NADPH. D155 serves as a coordination point for Mn(2+). Residues S156, E157, S182, and H205 each coordinate 1-deoxy-D-xylulose 5-phosphate. E157 lines the Mn(2+) pocket. G211 serves as a coordination point for NADPH. 1-deoxy-D-xylulose 5-phosphate-binding residues include S218, N223, K224, and E227. E227 lines the Mn(2+) pocket.

Belongs to the DXR family. Mg(2+) is required as a cofactor. The cofactor is Mn(2+).

It carries out the reaction 2-C-methyl-D-erythritol 4-phosphate + NADP(+) = 1-deoxy-D-xylulose 5-phosphate + NADPH + H(+). Its pathway is isoprenoid biosynthesis; isopentenyl diphosphate biosynthesis via DXP pathway; isopentenyl diphosphate from 1-deoxy-D-xylulose 5-phosphate: step 1/6. Functionally, catalyzes the NADPH-dependent rearrangement and reduction of 1-deoxy-D-xylulose-5-phosphate (DXP) to 2-C-methyl-D-erythritol 4-phosphate (MEP). This is 1-deoxy-D-xylulose 5-phosphate reductoisomerase from Xanthomonas oryzae pv. oryzae (strain PXO99A).